The sequence spans 224 residues: PKHD-type hydroxylase SO_3913 (224 aa).

One can recognise a Fe2OG dioxygenase domain in the interval 78 to 176 (QFYPPLFNRY…RTSAFMWLQS (99 aa)). Residues histidine 96, aspartate 98, and histidine 157 each coordinate Fe cation. 2-oxoglutarate is bound at residue arginine 167.

Requires Fe(2+) as cofactor. The cofactor is L-ascorbate.

This chain is PKHD-type hydroxylase SO_3913, found in Shewanella oneidensis (strain ATCC 700550 / JCM 31522 / CIP 106686 / LMG 19005 / NCIMB 14063 / MR-1).